The sequence spans 202 residues: Probable chemoreceptor glutamine deamidase CheD (202 aa).

The protein belongs to the CheD family.

It carries out the reaction L-glutaminyl-[protein] + H2O = L-glutamyl-[protein] + NH4(+). Its function is as follows. Probably deamidates glutamine residues to glutamate on methyl-accepting chemotaxis receptors (MCPs), playing an important role in chemotaxis. The chain is Probable chemoreceptor glutamine deamidase CheD from Thiobacillus denitrificans (strain ATCC 25259 / T1).